A 112-amino-acid polypeptide reads, in one-letter code: Class I hydrophobin 17 (112 aa).

The N-terminal stretch at 1–19 (MYSQSMVLLAAAFASFVAA) is a signal peptide. 4 cysteine pairs are disulfide-bonded: Cys30–Cys90, Cys37–Cys84, Cys38–Cys74, and Cys91–Cys104. N-linked (GlcNAc...) asparagine glycosylation occurs at Asn108.

The protein belongs to the fungal hydrophobin family. In terms of assembly, self-assembles to form functional amyloid fibrils called rodlets. Self-assembly into fibrillar rodlets occurs spontaneously at hydrophobic:hydrophilic interfaces and the rodlets further associate laterally to form amphipathic monolayers.

Its subcellular location is the secreted. It localises to the cell wall. In terms of biological role, aerial growth, conidiation, and dispersal of filamentous fungi in the environment rely upon a capability of their secreting small amphipathic proteins called hydrophobins (HPBs) with low sequence identity. Class I can self-assemble into an outermost layer of rodlet bundles on aerial cell surfaces, conferring cellular hydrophobicity that supports fungal growth, development and dispersal; whereas Class II form highly ordered films at water-air interfaces through intermolecular interactions but contribute nothing to the rodlet structure. Hydph17 is a class I hydrophobin involved in mycelial growth. The chain is Class I hydrophobin 17 from Pleurotus ostreatus (strain PC15) (Oyster mushroom).